A 131-amino-acid chain; its full sequence is Small ribosomal subunit protein eS8 (131 aa).

Residues 1 to 38 (MKLGAYYKGGDLKKPSGGKKRKVRRTKKKALGGGPPQI) form a disordered region. Positions 16–30 (SGGKKRKVRRTKKKA) are enriched in basic residues.

It belongs to the eukaryotic ribosomal protein eS8 family. As to quaternary structure, part of the 30S ribosomal subunit.

The sequence is that of Small ribosomal subunit protein eS8 from Pyrobaculum arsenaticum (strain DSM 13514 / JCM 11321 / PZ6).